We begin with the raw amino-acid sequence, 414 residues long: Gamma-glutamyl phosphate reductase (414 aa).

The protein belongs to the gamma-glutamyl phosphate reductase family.

It is found in the cytoplasm. The catalysed reaction is L-glutamate 5-semialdehyde + phosphate + NADP(+) = L-glutamyl 5-phosphate + NADPH + H(+). It functions in the pathway amino-acid biosynthesis; L-proline biosynthesis; L-glutamate 5-semialdehyde from L-glutamate: step 2/2. Its function is as follows. Catalyzes the NADPH-dependent reduction of L-glutamate 5-phosphate into L-glutamate 5-semialdehyde and phosphate. The product spontaneously undergoes cyclization to form 1-pyrroline-5-carboxylate. The sequence is that of Gamma-glutamyl phosphate reductase from Geobacillus kaustophilus (strain HTA426).